Reading from the N-terminus, the 392-residue chain is 23S rRNA (uracil(747)-C(5))-methyltransferase RlmC (392 aa).

Residues cysteine 4, cysteine 12, cysteine 15, and cysteine 93 each coordinate [4Fe-4S] cluster. Glutamine 218, phenylalanine 247, glutamate 275, and asparagine 321 together coordinate S-adenosyl-L-methionine. The active-site Nucleophile is cysteine 348.

This sequence belongs to the class I-like SAM-binding methyltransferase superfamily. RNA M5U methyltransferase family. RlmC subfamily.

It carries out the reaction uridine(747) in 23S rRNA + S-adenosyl-L-methionine = 5-methyluridine(747) in 23S rRNA + S-adenosyl-L-homocysteine + H(+). Its function is as follows. Catalyzes the formation of 5-methyl-uridine at position 747 (m5U747) in 23S rRNA. In Haemophilus influenzae (strain 86-028NP), this protein is 23S rRNA (uracil(747)-C(5))-methyltransferase RlmC.